The chain runs to 373 residues: Probable tRNA sulfurtransferase (373 aa).

Residues 54 to 158 (NKNIEELSKV…NDVAYFYYKI (105 aa)) form the THUMP domain. Residues 176–177 (LF), 201–202 (NF), K256, G278, and Q287 contribute to the ATP site.

It belongs to the ThiI family.

The protein localises to the cytoplasm. It catalyses the reaction [ThiI sulfur-carrier protein]-S-sulfanyl-L-cysteine + a uridine in tRNA + 2 reduced [2Fe-2S]-[ferredoxin] + ATP + H(+) = [ThiI sulfur-carrier protein]-L-cysteine + a 4-thiouridine in tRNA + 2 oxidized [2Fe-2S]-[ferredoxin] + AMP + diphosphate. The catalysed reaction is [ThiS sulfur-carrier protein]-C-terminal Gly-Gly-AMP + S-sulfanyl-L-cysteinyl-[cysteine desulfurase] + AH2 = [ThiS sulfur-carrier protein]-C-terminal-Gly-aminoethanethioate + L-cysteinyl-[cysteine desulfurase] + A + AMP + 2 H(+). Its pathway is cofactor biosynthesis; thiamine diphosphate biosynthesis. In terms of biological role, catalyzes the ATP-dependent transfer of a sulfur to tRNA to produce 4-thiouridine in position 8 of tRNAs, which functions as a near-UV photosensor. Also catalyzes the transfer of sulfur to the sulfur carrier protein ThiS, forming ThiS-thiocarboxylate. This is a step in the synthesis of thiazole, in the thiamine biosynthesis pathway. The sulfur is donated as persulfide by IscS. The chain is Probable tRNA sulfurtransferase from Saccharolobus islandicus (strain L.S.2.15 / Lassen #1) (Sulfolobus islandicus).